The following is a 719-amino-acid chain: Nucleolar complex protein 2 homolog (719 aa).

A compositionally biased stretch (basic residues) spans 1-24; sequence MKLLKKSSSLKKGVTKRAKLQKKP. 3 disordered regions span residues 1-67, 86-136, and 643-719; these read MKLL…GMKK, LQQE…TKIK, and ALEN…SDED. The span at 25-42 shows a compositional bias: basic and acidic residues; sequence PSKDEASSSDEELAKLDG. A compositionally biased stretch (acidic residues) spans 89–130; the sequence is EDADLLNMEEDEDDDEEGEDNEDEEDEEEEEESDEDDDEEDD. Basic and acidic residues predominate over residues 643–661; that stretch reads ALENSKKDDKKKKKEEEAA.

It belongs to the NOC2 family.

The protein resides in the nucleus. Functionally, required for normal somatic gonad development and for regulation of germline development and proliferation. The protein is Nucleolar complex protein 2 homolog (pro-2) of Caenorhabditis briggsae.